The primary structure comprises 374 residues: 2-oxoglutarate-Fe(II) type oxidoreductase ppzC (374 aa).

Positions K111–E131 are disordered. The Fe2OG dioxygenase domain maps to Y220–F330. The Fe cation site is built by H254, D256, and H311. R321 is a 2-oxoglutarate binding site.

Belongs to the iron/ascorbate-dependent oxidoreductase family. It depends on Fe(2+) as a cofactor.

The catalysed reaction is peramine + 2-oxoglutarate + O2 = 8-hydroxyperamine + succinate + CO2. Its pathway is secondary metabolite biosynthesis. Functionally, 2-oxoglutarate-Fe(II) type oxidoreductase; part of the gene cluster that mediates the biosynthesis of pyrrolopyrazines, secondary metabolites showing insecticidal activity. Within the pathway, ppzC uses peramine as substrate for hydroxylation to yield the novel analog 8-hydroxyperamine. The single multifunctional NRPS ppzA is sufficient to produce peramine via condensation of 1-pyrroline-5-carboxylate and arginine, N-methylation of the alpha-amino group of arginine and reduction of the thioester and the cyclization to form an iminium ion resulting in release from the peptide synthetase. Deprotonation of this intermediate and oxidation of the pyrroline ring would give rise to peramine. In Epichloe species that produce only peramine, the peramine synthetase gene is not localized in a gene cluster, in contrast to Metarhizium species that contain additional pyrrolopyrazine biosynthesis genes. The 2-oxoglutarate-Fe(II) type oxidoreductase ppzC hydroxylates peramine to yield the newly identified compound 8-hydroxyperamine whereas ppzD converts L-proline into trans-4-hydroxy-L-proline, a precursor of peramine biosynthesis. This Metarhizium majus (strain ARSEF 297) protein is 2-oxoglutarate-Fe(II) type oxidoreductase ppzC (ppzC).